The chain runs to 38 residues: Large ribosomal subunit protein bL36 (38 aa).

The protein belongs to the bacterial ribosomal protein bL36 family.

The polypeptide is Large ribosomal subunit protein bL36 (rpmJ) (Streptococcus pneumoniae serotype 4 (strain ATCC BAA-334 / TIGR4)).